A 384-amino-acid chain; its full sequence is Probable L-aspartate decarboxylase (384 aa).

Lys233 is subject to N6-(pyridoxal phosphate)lysine.

Belongs to the group II decarboxylase family. MfnA subfamily. Pyridoxal 5'-phosphate is required as a cofactor.

The catalysed reaction is L-aspartate + H(+) = beta-alanine + CO2. It functions in the pathway cofactor biosynthesis; coenzyme A biosynthesis. Its function is as follows. Catalyzes the decarboxylation of L-aspartate to produce beta-alanine. This chain is Probable L-aspartate decarboxylase, found in Pyrococcus abyssi (strain GE5 / Orsay).